Consider the following 94-residue polypeptide: Exodeoxyribonuclease 7 small subunit (94 aa).

Belongs to the XseB family. In terms of assembly, heterooligomer composed of large and small subunits.

The protein localises to the cytoplasm. The catalysed reaction is Exonucleolytic cleavage in either 5'- to 3'- or 3'- to 5'-direction to yield nucleoside 5'-phosphates.. In terms of biological role, bidirectionally degrades single-stranded DNA into large acid-insoluble oligonucleotides, which are then degraded further into small acid-soluble oligonucleotides. The polypeptide is Exodeoxyribonuclease 7 small subunit (Ralstonia nicotianae (strain ATCC BAA-1114 / GMI1000) (Ralstonia solanacearum)).